The primary structure comprises 133 residues: Hemiptericin (133 aa).

Its function is as follows. Antibacterial peptide. Affects Gram-negative bacteria. This chain is Hemiptericin, found in Pyrrhocoris apterus (Sap sucking bug).